We begin with the raw amino-acid sequence, 100 residues long: uncharacterized protein (100 aa).

This is an uncharacterized protein from Acheta domesticus (House cricket).